The sequence spans 411 residues: ATP-dependent Clp protease ATP-binding subunit ClpX (411 aa).

The 51-residue stretch at 1–51 (MAKKKDEEYCSFCGMPRTQVNLMLEGVHAHICDECALRAGEVVREALQKFK) folds into the ClpX-type ZB domain. Zn(2+) is bound by residues Cys-10, Cys-13, Cys-32, and Cys-35. ATP is bound at residue 119–126 (PTGTGKTL).

It belongs to the ClpX chaperone family. In terms of assembly, component of the ClpX-ClpP complex. Forms a hexameric ring that, in the presence of ATP, binds to fourteen ClpP subunits assembled into a disk-like structure with a central cavity, resembling the structure of eukaryotic proteasomes.

ATP-dependent specificity component of the Clp protease. It directs the protease to specific substrates. Can perform chaperone functions in the absence of ClpP. In Porphyromonas gingivalis (strain ATCC 33277 / DSM 20709 / CIP 103683 / JCM 12257 / NCTC 11834 / 2561), this protein is ATP-dependent Clp protease ATP-binding subunit ClpX.